The following is a 316-amino-acid chain: tRNA dimethylallyltransferase (316 aa).

Gly17–Thr24 provides a ligand contact to ATP. Thr19 to Thr24 lines the substrate pocket. 4 interaction with substrate tRNA regions span residues Asp42 to Leu45, Gln166 to Arg170, Arg247 to Arg252, and Lys280 to Arg287.

This sequence belongs to the IPP transferase family. In terms of assembly, monomer. Requires Mg(2+) as cofactor.

The catalysed reaction is adenosine(37) in tRNA + dimethylallyl diphosphate = N(6)-dimethylallyladenosine(37) in tRNA + diphosphate. In terms of biological role, catalyzes the transfer of a dimethylallyl group onto the adenine at position 37 in tRNAs that read codons beginning with uridine, leading to the formation of N6-(dimethylallyl)adenosine (i(6)A). This chain is tRNA dimethylallyltransferase, found in Cronobacter sakazakii (strain ATCC BAA-894) (Enterobacter sakazakii).